The sequence spans 793 residues: Pleckstrin homology domain-containing family H member 3 (793 aa).

The first 18 residues, 1-18, serve as a signal peptide directing secretion; it reads MPLPGGLWWLLCCRRGFT. Residues 28–62 are disordered; that stretch reads ELSGDGDEDEDEETFELRTPSPAGGGRGPLEVTLT. Residues 29–41 show a composition bias toward acidic residues; the sequence is LSGDGDEDEDEET. The residue at position 30 (Ser30) is a Phosphoserine. One can recognise a PH domain in the interval 95 to 199; sequence DIVVKGWLYR…WGVALREVIA (105 aa). Residues 237-399 enclose the MyTH4 domain; the sequence is HTSGALYAPL…PSLAEISALS (163 aa). One can recognise an FERM domain in the interval 404-754; that stretch reads LLCTVHCPGA…AYLANPSPER (351 aa). Disordered stretches follow at residues 554–586 and 598–622; these read VPLP…SAAL and KRRA…EGGG. Positions 598 to 608 are enriched in basic residues; it reads KRRAERARRGG. 2 positions are modified to omega-N-methylarginine: Arg638 and Arg642. Positions 750-762 are enriched in low complexity; that stretch reads PSPERPCSSSSPP. A disordered region spans residues 750-793; sequence PSPERPCSSSSPPCQDLPDTSPPSQRPGLDEPQGQSGCLGQLQD. Polar residues predominate over residues 782 to 793; sequence QGQSGCLGQLQD.

The chain is Pleckstrin homology domain-containing family H member 3 (PLEKHH3) from Homo sapiens (Human).